The sequence spans 548 residues: Organic cation transporter protein (548 aa).

Residues 1 to 22 (MGYDDVITHLGEFGPYQKRIYY) are Cytoplasmic-facing. A helical membrane pass occupies residues 23–43 (LLCLPAIVCAFHKLAGVFLLA). The Extracellular segment spans residues 44–127 (KPDFRCALPY…TEWNLVCSRS (84 aa)). Asparagine 55, asparagine 67, asparagine 89, and asparagine 97 each carry an N-linked (GlcNAc...) asparagine glycan. A helical membrane pass occupies residues 128–148 (LLSATSDSLFMLGVLLGSLIF). At 149–158 (GQMSDKLGRK) the chain is on the cytoplasmic side. Residues 159–179 (PTFFASLVLQLIFGVLAAVAP) traverse the membrane as a helical segment. Topologically, residues 180–189 (EYFSYTISRM) are extracellular. A helical transmembrane segment spans residues 190-210 (IVGATTSGVFLVAYVIALEMV). At 211-219 (GSSYRLFAG) the chain is on the cytoplasmic side. The helical transmembrane segment at 220-240 (VAMQMFFSVGFMLTAGFAYFI) threads the bilayer. Residues 241–244 (HDWR) lie on the Extracellular side of the membrane. A helical transmembrane segment spans residues 245–265 (WLQIAITLPGLLFLCYYWIIP). At 266-337 (ESARWLLMKG…LLRYPNLRRK (72 aa)) the chain is on the cytoplasmic side. Residues 338–358 (TLLIFFDWFVNSGVYYGLSWN) traverse the membrane as a helical segment. Topologically, residues 359 to 366 (TNNLGGNQ) are extracellular. The chain crosses the membrane as a helical span at residues 367–387 (LVNFMISGAVEIPGYTLLLFT). Topologically, residues 388-395 (LNRWGRRS) are cytoplasmic. A helical membrane pass occupies residues 396–416 (ILCGTMMVAGISLLATIFVPS). Over 417 to 419 (DMN) the chain is Extracellular. The chain crosses the membrane as a helical span at residues 420–440 (WLIVACAMIGKLAITSSYGTI). The Cytoplasmic segment spans residues 441–453 (YIFSAEQFPTVVR). Residues 454 to 474 (NVGLGASSMVARVGGILAPYL) form a helical membrane-spanning segment. Over 475-482 (KLLGEIWR) the chain is Extracellular. Residues 483-503 (PLPLIICGALSLTAGLLSLLL) traverse the membrane as a helical segment. Topologically, residues 504-548 (PETLNKPMPETIEDGENFGKKPAPQETAEEGGTQELSGMLNGKSG) are cytoplasmic. Residues 512–548 (PETIEDGENFGKKPAPQETAEEGGTQELSGMLNGKSG) are disordered.

This sequence belongs to the major facilitator (TC 2.A.1) superfamily. Organic cation transporter (TC 2.A.1.19) family. As to expression, expressed in embryos and adults at low level. Expressed at higher level in third instar larvae.

Its subcellular location is the membrane. Functionally, probably transports organic cations. This chain is Organic cation transporter protein (Orct), found in Drosophila melanogaster (Fruit fly).